The sequence spans 441 residues: Inner kinetochore subunit mis17 (441 aa).

A compositionally biased stretch (polar residues) spans 160–173 (SSILENSPPNKVQR). The disordered stretch occupies residues 160-240 (SSILENSPPN…TSSMAPRNLL (81 aa)). Residues 174 to 183 (LSSLDSSQDS) are compositionally biased toward low complexity. Positions 192–201 (VTGTTFSSQA) are enriched in polar residues. Positions 217 to 233 (SLTNQSSSLQSSLQTSS) are enriched in low complexity.

Belongs to the CENP-U/AME1 family. In terms of assembly, component of the heterotetrameric kinetochore subcomplex COMA, which consists of fta2, fta7, mal2 and mis17. The COMA subcomplex is part of a larger constitutive centromere-associated network (CCAN) (also known as central kinetochore Sim4 complex in fission yeast), which is composed of at least cnl2, cnp3, cnp20, fta1, fta2, fta3, fta4, fta6, fta7, mal2, mhf1, mhf2, mis6, mis15, mis17, sim4 and wip1. Interacts with mis6 and mis15.

It localises to the nucleus. The protein localises to the chromosome. Its subcellular location is the centromere. The protein resides in the kinetochore. In terms of biological role, component of the kinetochore, a multiprotein complex that assembles on centromeric DNA and attaches chromosomes to spindle microtubules, mediating chromosome segregation and sister chromatid segregation during meiosis and mitosis. Component of the inner kinetochore COMA complex, which connects centromere-associated proteins and the outer kinetochore. COMA interacts with other inner kinetochore proteins to form the inner kinetochore constitutive centromere-associated network (CCAN), which serves as a structural platform for outer kinetochore assembly. The chain is Inner kinetochore subunit mis17 (mis17) from Schizosaccharomyces pombe (strain 972 / ATCC 24843) (Fission yeast).